A 104-amino-acid chain; its full sequence is Protein E7 (104 aa).

The E7 terminal domain stretch occupies residues 1 to 49 (MRGNAPTLKDIILYDLPTCDPTTCDTPPVDLYCYEQFDTSDEDDEDDDQ). The short motif at 31-35 (LYCYE) is the LXCXE motif; interaction with host RB1 and TMEM173/STING element. Residues 64–100 (CTQCGRSVKLVVSSTGADIQQLHQMLLDTLGIVCPLC) fold into a zinc finger. Positions 82-90 (IQQLHQMLL) match the Nuclear export signal motif.

It belongs to the papillomaviridae E7 protein family. In terms of assembly, homodimer. Homooligomer. Interacts with host RB1; this interaction induces dissociation of RB1-E2F1 complex thereby disrupting RB1 activity. Interacts with host EP300; this interaction represses EP300 transcriptional activity. Interacts with protein E2; this interaction inhibits E7 oncogenic activity. Interacts with host TMEM173/STING; this interaction impairs the ability of TMEM173/STING to sense cytosolic DNA and promote the production of type I interferon (IFN-alpha and IFN-beta). Post-translationally, highly phosphorylated.

The protein resides in the host cytoplasm. Its subcellular location is the host nucleus. In terms of biological role, plays a role in viral genome replication by driving entry of quiescent cells into the cell cycle. Stimulation of progression from G1 to S phase allows the virus to efficiently use the cellular DNA replicating machinery to achieve viral genome replication. E7 protein has both transforming and trans-activating activities. Induces the disassembly of the E2F1 transcription factor from RB1, with subsequent transcriptional activation of E2F1-regulated S-phase genes. Interferes with host histone deacetylation mediated by HDAC1 and HDAC2, leading to transcription activation. Also plays a role in the inhibition of both antiviral and antiproliferative functions of host interferon alpha. Interaction with host TMEM173/STING impairs the ability of TMEM173/STING to sense cytosolic DNA and promote the production of type I interferon (IFN-alpha and IFN-beta). This Homo sapiens (Human) protein is Protein E7.